Reading from the N-terminus, the 490-residue chain is Probable cytochrome P450 308a1 (490 aa).

Heme is bound at residue Cys431.

It belongs to the cytochrome P450 family. Requires heme as cofactor.

It is found in the endoplasmic reticulum membrane. Its subcellular location is the microsome membrane. Its function is as follows. May be involved in the metabolism of insect hormones and in the breakdown of synthetic insecticides. In Drosophila melanogaster (Fruit fly), this protein is Probable cytochrome P450 308a1 (Cyp308a1).